A 446-amino-acid chain; its full sequence is Minor fimbrium tip subunit Mfa3 (446 aa).

The N-terminal stretch at 1–20 (MMQLKKRYFALILLLFLWSG) is a signal peptide. C21 carries N-palmitoyl cysteine lipidation. The S-diacylglycerol cysteine moiety is linked to residue C21. Positions 21–43 (CDRGVDPQPDPLQPDVYLLVNAR) are excised as a propeptide.

It belongs to the bacteroidetes fimbrillin superfamily. FimB/Mfa2 family. In terms of assembly, component of the fimbrium tip. Minor fimbriae are composed of a structural subunit, most often Mfa1, and the accessory subunits Mfa3, Mfa4 and Mfa5. Fimbrium assembly occurs by linear, head-to-tail oligomerization of fimbrial subunits. This is mediated via insertion of a C-terminal beta-strand from one subunit into a groove in the N-terminal domain of the following subunit. Mfa3 is required for Mfa4 and Mfa5 insertion into the fimbrium.

It localises to the fimbrium. The protein localises to the cell outer membrane. Tip subunit of the minor fimbriae. These filamentous pili are attached to the cell surface; they mediate biofilm formation, adhesion onto host cells and onto other bacteria that are part of the oral microbiome. They play an important role in invasion of periodontal tissues and are recognized as major virulence factors. Fimbrium subunits from different strains have highly divergent sequences, and this correlates with pathogenicity. This is Minor fimbrium tip subunit Mfa3 (mfa3) from Porphyromonas gingivalis (strain ATCC 33277 / DSM 20709 / CIP 103683 / JCM 12257 / NCTC 11834 / 2561).